The following is a 280-amino-acid chain: MFASPGPELFQFGPFVLRWYGLLIAAAVLIGLNLSSSLAQQRKLENGLISDLLPLLVLFSVIGARIYYVAFEWHNYAATPLKALAIWEGGIAIHGALIAGTLTLILFCRWRQQSFWDVLDVLVPSVALGQSIGRWGNFFNSEAFGIPTDLPWKLFIPEQNRPIIYVNQEFFHPTFLYESLWNLALFIILILLFRWGSKHLNKLPAGAMSCIYLMGYSLGRVWIEGLRIDSLCIGALPPACEGGLRIAQLMSGVMALAGSLGLWWLYGRKKPLPDPGFRPN.

A run of 4 helical transmembrane segments spans residues 12-32 (FGPF…LIGL), 52-72 (LLPL…VAFE), 86-106 (IWEG…TLIL), and 115-133 (FWDV…QSIG). Arg-134 lines the a 1,2-diacyl-sn-glycero-3-phospho-(1'-sn-glycerol) pocket. The next 3 helical transmembrane spans lie at 173-193 (PTFL…ILLF), 203-223 (LPAG…RVWI), and 246-266 (IAQL…WWLY).

This sequence belongs to the Lgt family.

Its subcellular location is the cell inner membrane. The catalysed reaction is L-cysteinyl-[prolipoprotein] + a 1,2-diacyl-sn-glycero-3-phospho-(1'-sn-glycerol) = an S-1,2-diacyl-sn-glyceryl-L-cysteinyl-[prolipoprotein] + sn-glycerol 1-phosphate + H(+). Its pathway is protein modification; lipoprotein biosynthesis (diacylglyceryl transfer). Catalyzes the transfer of the diacylglyceryl group from phosphatidylglycerol to the sulfhydryl group of the N-terminal cysteine of a prolipoprotein, the first step in the formation of mature lipoproteins. This Synechococcus sp. (strain CC9902) protein is Phosphatidylglycerol--prolipoprotein diacylglyceryl transferase.